A 2187-amino-acid polypeptide reads, in one-letter code: Non-reducing polyketide synthase phnA (2187 aa).

An N-terminal acylcarrier protein transacylase domain (SAT) region spans residues Leu17–His255. In terms of domain architecture, Ketosynthase family 3 (KS3) spans His383–Asp819. Catalysis depends on for beta-ketoacyl synthase activity residues Cys555, His690, and His735. The segment at Arg926–Arg1226 is malonyl-CoA:ACP transacylase (MAT) domain. Ser1021 serves as the catalytic For acyl/malonyl transferase activity. Positions Pro1321–Pro1637 are product template (PT) domain. The tract at residues Gln1324–Gln1458 is N-terminal hotdog fold. Residues Gln1324–Asp1633 form the PKS/mFAS DH domain. The active-site Proton acceptor; for dehydratase activity is His1356. Residues Thr1486–Asp1633 form a C-terminal hotdog fold region. Asp1546 serves as the catalytic Proton donor; for dehydratase activity. Positions Lys1652–Pro1669 are enriched in low complexity. Positions Lys1652 to Ser1681 are disordered. 2 consecutive Carrier domains span residues Ser1684–Asp1758 and Ser1796–Met1874. O-(pantetheine 4'-phosphoryl)serine is present on Ser1718. Residues Leu1754–Ser1796 form a disordered region. Residues Ser1757–Glu1774 show a composition bias toward acidic residues. Ser1834 is subject to O-(pantetheine 4'-phosphoryl)serine. The interval Ser1906–Phe2183 is thioesterase (TE) domain. The active-site For thioesterase activity is Ser2009.

It carries out the reaction 6 malonyl-CoA + acetyl-CoA + 5 H(+) = 3,6,7,9-tetrahydroxy-3-methyl-2,3-dihydro-1H-naphtho[2,1-b]pyran-1-one + 6 CO2 + 7 CoA + H2O. Its pathway is secondary metabolite biosynthesis. Functionally, non-reducing polyketide synthase; part of the gene cluster that mediates the biosynthesis of phenalenones such as herqueinone, compounds that have been reported to treat tumors, bacterial infections and/or mycoses, and rheumatic diseases. The non-reducing polyketide synthase phnA synthesizes the heptaketide backbone and cyclizes it into the angular, hemiketal-containing naphtho-gamma-pyrone prephenalenone. The product template (PT) domain of phnA catalyzes only the C4-C9 aldol condensation, which is unprecedented among known PT domains. The transformation of prephenalenone to phenalenones requires an FAD-dependent monooxygenase phnB, which catalyzes the C2 aromatic hydroxylation of prephenalenone and ring opening of the gamma-pyrone ring simultaneously. Subsequent intramolecular deprotonation of C3 phenolic oxygen accelerates phenalenone ring closure to yield the tricyclic phenalenone core with a C2 hydroxylation. The prenyltransferase phnF further catalyzes reverse C-prenylation of phenalenone by direct electrophilic substitution at C6, or possibly via first a forward O-prenylation of a neighboring phenol in phenalenone, followed by a Claisen rearrangement. The hydroalkoxylation enzyme phnH catalyzes the 5-exo-trig cyclization via acid catalysis after the spontaneous deprotonation of 7-OH, which leads to the formation of the dihydrobenzofuran atrovenetin. Atrovenetin is further converted to deoxyherqueinone by the O-methyltransferase phnC which can methylate C2-OH to stabilize the northern portion of the phenalenone core. Finally, the oxidoreductase phnG converts deoxyherqueinone to herqueinone via C6 hydroxylation. The protein is Non-reducing polyketide synthase phnA of Penicillium herquei.